We begin with the raw amino-acid sequence, 1196 residues long: Truncated transposon Ty1-A Gag-Pol polyprotein (1196 aa).

The region spanning 101–276 (NSYEPFQYLH…AGLDISTLLP (176 aa)) is the Integrase catalytic domain. 2 residues coordinate Mg(2+): Asp-112 and Asp-177. Disordered stretches follow at residues 397 to 528 (SKAV…ETEK), 533 to 552 (RSPS…NIVP), and 571 to 628 (DLPL…DNET). Low complexity predominate over residues 401 to 410 (SPTDSTPPST). Over residues 446 to 456 (STPQISNIEST) the composition is skewed to polar residues. A compositionally biased stretch (basic and acidic residues) spans 479–494 (ESSHASKSKDFRHSDS). 2 stretches are compositionally biased toward polar residues: residues 495 to 523 (YSEN…QISD) and 542 to 552 (PENNSSHNIVP). The Bipartite nuclear localization signal motif lies at 619-653 (KKRSLEDNETEIKVSRDTWNTKNMRSLEPPRSKKR). The 139-residue stretch at 779-917 (NNYYITQLDI…DILGLEIKYQ (139 aa)) folds into the Reverse transcriptase Ty1/copia-type domain. Mg(2+) contacts are provided by Asp-787, Asp-868, Asp-869, Asp-1051, Glu-1093, and Asp-1126. The RNase H Ty1/copia-type domain maps to 1051–1193 (DASYGNQPYY…IKTFKLLTNK (143 aa)).

Initially, virus-like particles (VLPs) are composed of the structural unprocessed proteins Gag and Gag-Pol, and also contain the host initiator methionine tRNA (tRNA(i)-Met) which serves as a primer for minus-strand DNA synthesis, and a dimer of genomic Ty RNA. Processing of the polyproteins occurs within the particle and proceeds by an ordered pathway, called maturation. First, the protease (PR) is released by autocatalytic cleavage of the Gag-Pol polyprotein yielding capsid protein p45 and a Pol-p154 precursor protein. This cleavage is a prerequisite for subsequent processing of Pol-p154 at the remaining sites to release the mature structural and catalytic proteins. Maturation takes place prior to the RT reaction and is required to produce transposition-competent VLPs.

The protein resides in the cytoplasm. The protein localises to the nucleus. It catalyses the reaction DNA(n) + a 2'-deoxyribonucleoside 5'-triphosphate = DNA(n+1) + diphosphate. The catalysed reaction is Endonucleolytic cleavage to 5'-phosphomonoester.. Functionally, reverse transcriptase/ribonuclease H (RT) is a multifunctional enzyme that catalyzes the conversion of the retro-elements RNA genome into dsDNA within the VLP. The enzyme displays a DNA polymerase activity that can copy either DNA or RNA templates, and a ribonuclease H (RNase H) activity that cleaves the RNA strand of RNA-DNA heteroduplexes during plus-strand synthesis and hydrolyzes RNA primers. The conversion leads to a linear dsDNA copy of the retrotransposon that includes long terminal repeats (LTRs) at both ends. Its function is as follows. Integrase (IN) targets the VLP to the nucleus, where a subparticle preintegration complex (PIC) containing at least integrase and the newly synthesized dsDNA copy of the retrotransposon must transit the nuclear membrane. Once in the nucleus, integrase performs the integration of the dsDNA into the host genome. This is Truncated transposon Ty1-A Gag-Pol polyprotein (TY1B-A) from Saccharomyces cerevisiae (strain ATCC 204508 / S288c) (Baker's yeast).